A 158-amino-acid chain; its full sequence is Cyclic pyranopterin monophosphate synthase (158 aa).

Residues 76-78 (MCH) and 114-115 (ME) contribute to the substrate site. The active site involves D129.

Belongs to the MoaC family. In terms of assembly, homohexamer; trimer of dimers.

It carries out the reaction (8S)-3',8-cyclo-7,8-dihydroguanosine 5'-triphosphate = cyclic pyranopterin phosphate + diphosphate. It participates in cofactor biosynthesis; molybdopterin biosynthesis. Its function is as follows. Catalyzes the conversion of (8S)-3',8-cyclo-7,8-dihydroguanosine 5'-triphosphate to cyclic pyranopterin monophosphate (cPMP). The polypeptide is Cyclic pyranopterin monophosphate synthase (Clostridium perfringens (strain 13 / Type A)).